Here is a 126-residue protein sequence, read N- to C-terminus: Protein ApaG (126 aa).

The region spanning Ser-2–His-126 is the ApaG domain.

The protein is Protein ApaG of Pseudomonas aeruginosa (strain LESB58).